Consider the following 84-residue polypeptide: MATGTDQVVGLGLVAVSLIIFTYYTAWVILLPFIDSQHVIHKYFLPRAYAVAIPLAAGLLLLLFVGLFISYVMLKTKRVTKKAQ.

The next 2 helical transmembrane spans lie at 11–31 (LGLV…VILL) and 49–69 (YAVA…GLFI).

It belongs to the DPM2 family. As to quaternary structure, component of the dolichol-phosphate mannose (DPM) synthase complex composed of DPM1, DPM2 and DPM3; in the complex interacts directly with DPM3. Component of the glycosylphosphatidylinositol-N-acetylglucosaminyltransferase (GPI-GnT) complex composed at least by PIGA, PIGC, PIGH, PIGP, PIGQ, PIGY and DPM2. Interacts with PIGA, PIGC and PIGQ.

It is found in the endoplasmic reticulum membrane. The protein operates within protein modification; protein glycosylation. Functionally, regulates the biosynthesis of dolichol phosphate-mannose. Regulatory subunit of the dolichol-phosphate mannose (DPM) synthase complex; essential for the ER localization and stable expression of DPM1. Part of the glycosylphosphatidylinositol-N-acetylglucosaminyltransferase (GPI-GnT) complex that catalyzes the transfer of N-acetylglucosamine from UDP-N-acetylglucosamine to phosphatidylinositol and participates in the first step of GPI biosynthesis. May act by regulating the GPI-GNT complex. This chain is Dolichol phosphate-mannose biosynthesis regulatory protein, found in Homo sapiens (Human).